The following is an 851-amino-acid chain: Periplasmic nitrate reductase (851 aa).

The segment at residues 1–29 (MQSNRRDFLKAQALAASAAAAGIPIVVEA) is a signal peptide (tat-type signal). Residues 44 to 100 (VRWDKAPCRFCGTGCAVMVGVQEGKVVATQGDPEAPVNRGLNCIKGYFLSKIMYGRD) form the 4Fe-4S Mo/W bis-MGD-type domain. [4Fe-4S] cluster contacts are provided by Cys-51, Cys-54, Cys-58, and Cys-86. Residues Lys-88, Gln-155, Asn-180, Cys-184, 217-224 (WGSNMAEM), 248-252 (STYEH), and 267-269 (QTD) contribute to the Mo-bis(molybdopterin guanine dinucleotide) site. A disordered region spans residues 317–338 (DATSNGYPGADGKPKGNPNDST). Mo-bis(molybdopterin guanine dinucleotide)-binding positions include Met-388, Gln-392, Asn-498, 524-525 (SD), Lys-547, Asp-574, and 741-750 (TGRVLEHWHT). Residue Phe-817 participates in substrate binding. Residues Asn-825 and Lys-842 each coordinate Mo-bis(molybdopterin guanine dinucleotide).

The protein belongs to the prokaryotic molybdopterin-containing oxidoreductase family. NasA/NapA/NarB subfamily. Component of the periplasmic nitrate reductase NapAB complex composed of NapA and NapB. Requires [4Fe-4S] cluster as cofactor. It depends on Mo-bis(molybdopterin guanine dinucleotide) as a cofactor. Post-translationally, predicted to be exported by the Tat system. The position of the signal peptide cleavage has not been experimentally proven.

The protein localises to the periplasm. The enzyme catalyses 2 Fe(II)-[cytochrome] + nitrate + 2 H(+) = 2 Fe(III)-[cytochrome] + nitrite + H2O. Its function is as follows. Catalytic subunit of the periplasmic nitrate reductase complex NapAB. Receives electrons from NapB and catalyzes the reduction of nitrate to nitrite. This chain is Periplasmic nitrate reductase, found in Leptothrix cholodnii (strain ATCC 51168 / LMG 8142 / SP-6) (Leptothrix discophora (strain SP-6)).